Here is a 277-residue protein sequence, read N- to C-terminus: 2-dehydro-3-deoxyphosphooctonate aldolase (277 aa).

The protein belongs to the KdsA family.

It localises to the cytoplasm. The catalysed reaction is D-arabinose 5-phosphate + phosphoenolpyruvate + H2O = 3-deoxy-alpha-D-manno-2-octulosonate-8-phosphate + phosphate. Its pathway is carbohydrate biosynthesis; 3-deoxy-D-manno-octulosonate biosynthesis; 3-deoxy-D-manno-octulosonate from D-ribulose 5-phosphate: step 2/3. It functions in the pathway bacterial outer membrane biogenesis; lipopolysaccharide biosynthesis. This Brucella anthropi (strain ATCC 49188 / DSM 6882 / CCUG 24695 / JCM 21032 / LMG 3331 / NBRC 15819 / NCTC 12168 / Alc 37) (Ochrobactrum anthropi) protein is 2-dehydro-3-deoxyphosphooctonate aldolase.